A 225-amino-acid polypeptide reads, in one-letter code: ATP-dependent dethiobiotin synthetase BioD (225 aa).

An ATP-binding site is contributed by 15-20; sequence EIGKTF. Residue threonine 19 participates in Mg(2+) binding. Lysine 40 is an active-site residue. ATP is bound by residues aspartate 57, 118–121, 178–179, and 207–209; these read EGVG, NR, and PHV. Aspartate 57 and glutamate 118 together coordinate Mg(2+).

The protein belongs to the dethiobiotin synthetase family. Homodimer. The cofactor is Mg(2+).

The protein resides in the cytoplasm. It carries out the reaction (7R,8S)-7,8-diammoniononanoate + CO2 + ATP = (4R,5S)-dethiobiotin + ADP + phosphate + 3 H(+). It participates in cofactor biosynthesis; biotin biosynthesis; biotin from 7,8-diaminononanoate: step 1/2. Its function is as follows. Catalyzes a mechanistically unusual reaction, the ATP-dependent insertion of CO2 between the N7 and N8 nitrogen atoms of 7,8-diaminopelargonic acid (DAPA, also called 7,8-diammoniononanoate) to form a ureido ring. The sequence is that of ATP-dependent dethiobiotin synthetase BioD from Aromatoleum aromaticum (strain DSM 19018 / LMG 30748 / EbN1) (Azoarcus sp. (strain EbN1)).